The following is a 79-amino-acid chain: Acyl carrier protein (79 aa).

Residues E2–G77 enclose the Carrier domain. At S37 the chain carries O-(pantetheine 4'-phosphoryl)serine.

The protein belongs to the acyl carrier protein (ACP) family. 4'-phosphopantetheine is transferred from CoA to a specific serine of apo-ACP by AcpS. This modification is essential for activity because fatty acids are bound in thioester linkage to the sulfhydryl of the prosthetic group.

It is found in the cytoplasm. It functions in the pathway lipid metabolism; fatty acid biosynthesis. Its function is as follows. Carrier of the growing fatty acid chain in fatty acid biosynthesis. In Bordetella avium (strain 197N), this protein is Acyl carrier protein.